A 584-amino-acid chain; its full sequence is MARPSPLCLLLLLTLLPPIVPSNSLLTEPPFRWRFYLHETWTQGNRLSTVTLATVDCQPHGCQAQVTFNFTSFKSVLRGWSNPTIGFVYDQTHSNCRDYWVDTNGGCPYAYCRMHVTQLDTAKKVQHTYRLTSDGRTTYFLTIPDPWDSRWVSGVTGRLYRWPTDSYPVGKLRIFLTYIRVIPQVLSNLQDQADNIKHQEEVINTLVQSHPKADMVTYDDKAEAGLFSWITLVRHGARLVNMAGLVNLSHCFLCTALSQPPLVAVPLPQAFNTSGNHTAHPSGVFSEQVPLFRDPLQPQFPFCYTTPNSSWCNQTYSGSLSNLSAPAGGYFWCNFTLTKHLNISSNNTLSRNLCLPISLVPRLTLYSEAELSSLVNPPMRQKRAVFPPLVIGVSLTSSLVASGLGTGAIVHFISSSQDLSIKLQMAIEASAESLASLQRQITSVAKVAMQNRRALDLLTADKGGTCMFLGEECCYYINESGLVETSLLTLDKIRDGLHRPSSTPNYGGGWWQSPLTTWIIPFISPILIICLLLLIAPCVLKFIKNRISEVSRVTVNQMLLHPYSRLPTSEDHYDVALTQQEAAR.

An N-terminal signal peptide occupies residues 1–22 (MARPSPLCLLLLLTLLPPIVPS). At 23–514 (NSLLTEPPFR…NYGGGWWQSP (492 aa)) the chain is on the extracellular side. Residues Asn69 and Asn247 are each glycosylated (N-linked (GlcNAc...) asparagine). The CXXC motif lies at 251-254 (CFLC). N-linked (GlcNAc...) asparagine glycosylation is found at Asn272, Asn276, Asn308, Asn313, Asn322, Asn334, Asn342, and Asn346. The segment at 388–413 (PLVIGVSLTSSLVASGLGTGAIVHFI) is fusion peptide. A CKS-17 motif is present at residues 449–465 (MQNRRALDLLTADKGGT). The cysteines at positions 466 and 473 are disulfide-linked. The CX6CC motif lies at 466 to 474 (CMFLGEECC). A glycan (N-linked (GlcNAc...) asparagine) is linked at Asn478. The chain crosses the membrane as a helical span at residues 515 to 540 (LTTWIIPFISPILIICLLLLIAPCVL). Over 541 to 584 (KFIKNRISEVSRVTVNQMLLHPYSRLPTSEDHYDVALTQQEAAR) the chain is Cytoplasmic.

It belongs to the gamma type-C retroviral envelope protein family. HERV class-I F(c)1 env subfamily. As to quaternary structure, the surface (SU) and transmembrane (TM) proteins form a heterodimer. SU and TM are attached by noncovalent interactions or by a labile interchain disulfide bond. In terms of processing, specific enzymatic cleavages in vivo yield the mature SU and TM proteins. Post-translationally, the CXXC motif is highly conserved across a broad range of retroviral envelope proteins. It is thought to participate in the formation of a labile disulfide bond possibly with the CX6CC motif present in the transmembrane protein.

The protein resides in the virion. Its subcellular location is the cell membrane. Its function is as follows. Retroviral envelope proteins mediate receptor recognition and membrane fusion during early infection. Endogenous envelope proteins may have kept, lost or modified their original function during evolution. This endogenous envelope protein has lost its original fusogenic properties. Functionally, SU mediates receptor recognition. TM anchors the envelope heterodimer to the viral membrane through one transmembrane domain. The other hydrophobic domain, called fusion peptide, mediates fusion of the viral membrane with the target cell membrane. The sequence is that of Endogenous retrovirus group FC1 Env polyprotein (ERVFC1) from Pan troglodytes (Chimpanzee).